The sequence spans 336 residues: Fructose-1,6-bisphosphatase class 2 (336 aa).

Mn(2+) is bound by residues Asp-33, Glu-57, Asp-85, and Glu-88. Residues 88–90 (EGT), Tyr-119, 164–166 (KPR), 186–188 (DGD), and Gly-210 each bind substrate. Glu-213 is a binding site for Mn(2+).

This sequence belongs to the FBPase class 2 family. As to quaternary structure, homodimer. Mn(2+) is required as a cofactor.

The protein localises to the cytoplasm. The catalysed reaction is beta-D-fructose 1,6-bisphosphate + H2O = beta-D-fructose 6-phosphate + phosphate. It functions in the pathway carbohydrate biosynthesis; gluconeogenesis. Functionally, catalyzes the hydrolysis of fructose 1,6-bisphosphate to fructose 6-phosphate. This chain is Fructose-1,6-bisphosphatase class 2 (glpX), found in Shigella flexneri.